Consider the following 222-residue polypeptide: Ethylene-inducing xylanase 2 (222 aa).

An N-terminal signal peptide occupies residues 1–19 (MITFSSLLVTFSAISTSLA). A GH11 domain is found at 36–222 (QRNESSLVRR…GEGAATQTVS (187 aa)). Asn-38 and Asn-94 each carry an N-linked (GlcNAc...) asparagine glycan. The active-site Nucleophile is the Glu-120. Glu-209 serves as the catalytic Proton donor.

This sequence belongs to the glycosyl hydrolase 11 (cellulase G) family.

The enzyme catalyses Endohydrolysis of (1-&gt;4)-beta-D-xylosidic linkages in xylans.. The protein operates within glycan degradation; xylan degradation. Endo-1,4-beta-xylanase involved in the hydrolysis of xylan, a major structural heterogeneous polysaccharide found in plant biomass representing the second most abundant polysaccharide in the biosphere, after cellulose. May act as an elicitor of plant defense responses in certain plants but does not exhibit any cell death when transiently expressed in N.benthamiana. The chain is Ethylene-inducing xylanase 2 from Botryotinia fuckeliana (strain B05.10) (Noble rot fungus).